A 182-amino-acid polypeptide reads, in one-letter code: Large ribosomal subunit protein uL6 (182 aa).

It belongs to the universal ribosomal protein uL6 family. In terms of assembly, part of the 50S ribosomal subunit.

Functionally, this protein binds to the 23S rRNA, and is important in its secondary structure. It is located near the subunit interface in the base of the L7/L12 stalk, and near the tRNA binding site of the peptidyltransferase center. The sequence is that of Large ribosomal subunit protein uL6 from Methanococcus vannielii.